Reading from the N-terminus, the 659-residue chain is Enzymatic polyprotein (659 aa).

Residues 1–180 (MSLRNRTNPN…FLEEGGNHVD (180 aa)) are protease. The active site involves Asp34. The region spanning 252–436 (LELKVIKPSK…EKINFLGLEI (185 aa)) is the Reverse transcriptase domain.

The protein belongs to the caulimoviridae enzymatic polyprotein family.

It catalyses the reaction DNA(n) + a 2'-deoxyribonucleoside 5'-triphosphate = DNA(n+1) + diphosphate. Encodes for at least two polypeptides: protease (PR) and reverse transcriptase (RT). The protease processes the polyprotein in cis. Reverse transcriptase is multifunctional enzyme that converts the viral RNA genome into dsDNA in viral cytoplasmic capsids. This enzyme displays a DNA polymerase activity that can copy either DNA or RNA templates, and a ribonuclease H (RNase H) activity that cleaves the RNA strand of RNA-DNA heteroduplexes in a partially processive 3'- to 5'-endonucleasic mode. Neo-synthesized pregenomic RNA (pgRNA) are encapsidated, and reverse-transcribed inside the nucleocapsid. Partial (+)DNA is synthesized from the (-)DNA template and generates the relaxed circular DNA (RC-DNA) genome. After budding and infection, the RC-DNA migrates in the nucleus, and is converted into a plasmid-like covalently closed circular DNA (cccDNA). The polypeptide is Enzymatic polyprotein (Dianthus caryophyllus (Carnation)).